The following is a 292-amino-acid chain: Ribosomal protein L11 methyltransferase (292 aa).

S-adenosyl-L-methionine is bound by residues Thr-143, Gly-164, Asp-186, and Asn-227.

The protein belongs to the methyltransferase superfamily. PrmA family.

The protein resides in the cytoplasm. The catalysed reaction is L-lysyl-[protein] + 3 S-adenosyl-L-methionine = N(6),N(6),N(6)-trimethyl-L-lysyl-[protein] + 3 S-adenosyl-L-homocysteine + 3 H(+). In terms of biological role, methylates ribosomal protein L11. This is Ribosomal protein L11 methyltransferase from Hahella chejuensis (strain KCTC 2396).